A 490-amino-acid chain; its full sequence is MEATSSALSSTANLVKTIVGAGTLAIPYSFKSDGVLVGVILTLLAAVTSGLGLFVLSKCSKTLINPRNSSFFTLCMLTYPTLAPIFDLAMIVQCFGVGLSYLVLIGDLFPGLFGGERNYWIIASAVIIIPLCLVKKLDQLKYSSILGLFALAYISILVFSHFVFELGKGELTNILRNDICWWKIHDFKGLLSTFSIIIFAFTGSMNLFPMINELKDNSMENITFVINNSISLSTALFLIVGLSGYLTFGNETLGNLMLNYDPNSIWIVIGKFCLGSMLILSFPLLFHPLRIAVNNVIIWIEITYGGANPEEDPQVSEYTRASNLRPISMTVEDPAQPSDALDATSYNEQECLLPNGNFDNGSIESQENNNDERGTMAVAGDNEHHAPFVKSRFYWITALLLISMYTLALSVQSFALVLSFVGATGSTSISFTLPGLLGYKLIGLDSLAIGKMIPPKDRFYKRCSLLLVFYGLSVMFLSLYVTVFNRSDEA.

Topologically, residues 1–6 (MEATSS) are cytoplasmic. A helical transmembrane segment spans residues 7-27 (ALSSTANLVKTIVGAGTLAIP). Over 28-34 (YSFKSDG) the chain is Vacuolar. The chain crosses the membrane as a helical span at residues 35-55 (VLVGVILTLLAAVTSGLGLFV). Residues 56–84 (LSKCSKTLINPRNSSFFTLCMLTYPTLAP) lie on the Cytoplasmic side of the membrane. Residues 85-105 (IFDLAMIVQCFGVGLSYLVLI) form a helical membrane-spanning segment. At 106 to 108 (GDL) the chain is on the vacuolar side. A helical membrane pass occupies residues 109-129 (FPGLFGGERNYWIIASAVIII). Residues 130-143 (PLCLVKKLDQLKYS) are Cytoplasmic-facing. Residues 144 to 164 (SILGLFALAYISILVFSHFVF) form a helical membrane-spanning segment. The Vacuolar segment spans residues 165 to 190 (ELGKGELTNILRNDICWWKIHDFKGL). Residues 191–211 (LSTFSIIIFAFTGSMNLFPMI) form a helical membrane-spanning segment. At 212–221 (NELKDNSMEN) the chain is on the cytoplasmic side. Residues 222–242 (ITFVINNSISLSTALFLIVGL) traverse the membrane as a helical segment. Residues 243–264 (SGYLTFGNETLGNLMLNYDPNS) lie on the Vacuolar side of the membrane. Residues 265-285 (IWIVIGKFCLGSMLILSFPLL) form a helical membrane-spanning segment. Over 286 to 397 (FHPLRIAVNN…FVKSRFYWIT (112 aa)) the chain is Cytoplasmic. The segment at 355 to 374 (NGNFDNGSIESQENNNDERG) is disordered. The segment covering 357 to 368 (NFDNGSIESQEN) has biased composition (polar residues). The helical transmembrane segment at 398-418 (ALLLISMYTLALSVQSFALVL) threads the bilayer. Residues 419-428 (SFVGATGSTS) are Vacuolar-facing. The chain crosses the membrane as a helical span at residues 429–449 (ISFTLPGLLGYKLIGLDSLAI). Residues 450-463 (GKMIPPKDRFYKRC) are Cytoplasmic-facing. The helical transmembrane segment at 464–484 (SLLLVFYGLSVMFLSLYVTVF) threads the bilayer. The Vacuolar segment spans residues 485-490 (NRSDEA).

The protein belongs to the amino acid/polyamine transporter 2 family.

The protein localises to the vacuole membrane. Probable amino acid transporter of unknown specificity. The polypeptide is Vacuolar amino acid transporter 7 (AVT7) (Saccharomyces cerevisiae (strain ATCC 204508 / S288c) (Baker's yeast)).